A 118-amino-acid chain; its full sequence is Large ribosomal subunit protein bL20 (118 aa).

The protein belongs to the bacterial ribosomal protein bL20 family.

Functionally, binds directly to 23S ribosomal RNA and is necessary for the in vitro assembly process of the 50S ribosomal subunit. It is not involved in the protein synthesizing functions of that subunit. The chain is Large ribosomal subunit protein bL20 from Pseudomonas fluorescens (strain SBW25).